Reading from the N-terminus, the 442-residue chain is Cytokine receptor-like factor 3 (442 aa).

Met1 carries the N-acetylmethionine modification. A coiled-coil region spans residues 10–57 (ELLLQEARENVEAAQSYRRELGHRLEGLREARRQIKESASQTRDVLKQ). In terms of domain architecture, Fibronectin type-III spans 181–274 (PPVQIEELIE…PQIGHSTLVP (94 aa)).

Belongs to the cytokine receptor-like factor 3 family. In terms of tissue distribution, expressed in several embryonic and adult tissues, including adult and fetal brain, liver, spleen and pancreas. Expressed in adult, but not fetal kidney. Expressed in skin and squamous cell carcinoma (SCC) and in several other cancer types. Also detected in lesion actinic keratosis (AK).

It localises to the cytoplasm. In terms of biological role, may play a role in the negative regulation of cell cycle progression. This is Cytokine receptor-like factor 3 (CRLF3) from Homo sapiens (Human).